A 379-amino-acid chain; its full sequence is Chaperone protein DnaJ (379 aa).

Residues 5–70 (DYYEVLGVQK…QKRAAYDRFG (66 aa)) form the J domain. The segment at 137-215 (GATTTVRVPT…CGGQGRVRKE (79 aa)) adopts a CR-type zinc-finger fold. Zn(2+)-binding residues include C150, C153, C167, C170, C189, C192, C203, and C206. CXXCXGXG motif repeat units lie at residues 150 to 157 (CESCNGTG), 167 to 174 (CPTCNGHG), 189 to 196 (CPACHGVG), and 203 to 210 (CRTCGGQG).

The protein belongs to the DnaJ family. Homodimer. Zn(2+) is required as a cofactor.

It localises to the cytoplasm. Its function is as follows. Participates actively in the response to hyperosmotic and heat shock by preventing the aggregation of stress-denatured proteins and by disaggregating proteins, also in an autonomous, DnaK-independent fashion. Unfolded proteins bind initially to DnaJ; upon interaction with the DnaJ-bound protein, DnaK hydrolyzes its bound ATP, resulting in the formation of a stable complex. GrpE releases ADP from DnaK; ATP binding to DnaK triggers the release of the substrate protein, thus completing the reaction cycle. Several rounds of ATP-dependent interactions between DnaJ, DnaK and GrpE are required for fully efficient folding. Also involved, together with DnaK and GrpE, in the DNA replication of plasmids through activation of initiation proteins. The polypeptide is Chaperone protein DnaJ (Rhodospirillum centenum (strain ATCC 51521 / SW)).